The sequence spans 381 residues: Dihydroorotate dehydrogenase (quinone) (381 aa).

FMN contacts are provided by residues 77-81 (AGCDK) and A101. K81 serves as a coordination point for substrate. 126-129 (NRLG) is a substrate binding site. 2 residues coordinate FMN: N158 and N191. N191 serves as a coordination point for substrate. The active-site Nucleophile is the S194. Substrate is bound at residue N196. FMN-binding residues include K229 and T257. Substrate is bound at residue 258 to 259 (NT). FMN-binding positions include G287, G316, and 337–338 (YT).

The protein belongs to the dihydroorotate dehydrogenase family. Type 2 subfamily. As to quaternary structure, monomer. The cofactor is FMN.

It is found in the cell membrane. The enzyme catalyses (S)-dihydroorotate + a quinone = orotate + a quinol. Its pathway is pyrimidine metabolism; UMP biosynthesis via de novo pathway; orotate from (S)-dihydroorotate (quinone route): step 1/1. In terms of biological role, catalyzes the conversion of dihydroorotate to orotate with quinone as electron acceptor. The protein is Dihydroorotate dehydrogenase (quinone) (pyrD) of Synechocystis sp. (strain ATCC 27184 / PCC 6803 / Kazusa).